We begin with the raw amino-acid sequence, 311 residues long: Vomeronasal type-1 receptor 3 (311 aa).

Residues 1-5 (MASKD) are Extracellular-facing. The helical transmembrane segment at 6 to 26 (FAIGMILLSQIMVGFLGNFFL) threads the bilayer. Topologically, residues 27 to 51 (LYHYSFLCFTRGMLQSTDLILKHLT) are cytoplasmic. A helical membrane pass occupies residues 52 to 72 (IANSLVILSKGIPQTMAAFGL). At 73 to 92 (KDSLSDIGCKFVFYVHRVGR) the chain is on the extracellular side. Residues 93–113 (AVCVGNACLLSVFQVITISPS) traverse the membrane as a helical segment. Over 114-130 (EFRWAELKLHAHKYIRS) the chain is Cytoplasmic. A helical transmembrane segment spans residues 131–151 (FILVLCWILNTLVNITVLLHV). The Extracellular portion of the chain corresponds to 152-187 (TGKWNSINSTKTNDYGYCSGGSRSRIPHSLHIVLLS). A glycan (N-linked (GlcNAc...) asparagine) is linked at N159. The helical transmembrane segment at 188–208 (SLDVLCLGLMTLASGSMVFIL) threads the bilayer. Residues 209–232 (HRHKQQVQHIHGTNLSARSSPESR) are Cytoplasmic-facing. Residues 233 to 249 (VTQSILVLVSTLCYFTR) traverse the membrane as a helical segment. Residues 250–264 (SPPSLHMSLFPNPSW) lie on the Extracellular side of the membrane. A helical membrane pass occupies residues 265-285 (WLLNTSALITACFPMVSPFVL). The Cytoplasmic segment spans residues 286-311 (MSRHPRIPRLGSACCGRNPQFPKLVR).

Belongs to the G-protein coupled receptor 1 family.

The protein localises to the cell membrane. Functionally, putative pheromone receptor. The polypeptide is Vomeronasal type-1 receptor 3 (VN1R3) (Homo sapiens (Human)).